The sequence spans 467 residues: ATP synthase subunit beta (467 aa).

156-163 (GGAGVGKT) contacts ATP.

Belongs to the ATPase alpha/beta chains family. In terms of assembly, F-type ATPases have 2 components, CF(1) - the catalytic core - and CF(0) - the membrane proton channel. CF(1) has five subunits: alpha(3), beta(3), gamma(1), delta(1), epsilon(1). CF(0) has three main subunits: a(1), b(2) and c(9-12). The alpha and beta chains form an alternating ring which encloses part of the gamma chain. CF(1) is attached to CF(0) by a central stalk formed by the gamma and epsilon chains, while a peripheral stalk is formed by the delta and b chains.

It is found in the cell inner membrane. It catalyses the reaction ATP + H2O + 4 H(+)(in) = ADP + phosphate + 5 H(+)(out). Functionally, produces ATP from ADP in the presence of a proton gradient across the membrane. The catalytic sites are hosted primarily by the beta subunits. This is ATP synthase subunit beta from Cupriavidus pinatubonensis (strain JMP 134 / LMG 1197) (Cupriavidus necator (strain JMP 134)).